The primary structure comprises 151 residues: 6,7-dimethyl-8-ribityllumazine synthase (151 aa).

5-amino-6-(D-ribitylamino)uracil is bound by residues Phe-15, 49–51 (AVE), and 73–75 (AVI). 78-79 (ET) contacts (2S)-2-hydroxy-3-oxobutyl phosphate. His-81 serves as the catalytic Proton donor. A 5-amino-6-(D-ribitylamino)uracil-binding site is contributed by Phe-106. Arg-120 is a binding site for (2S)-2-hydroxy-3-oxobutyl phosphate.

It belongs to the DMRL synthase family. In terms of assembly, forms an icosahedral capsid composed of 60 subunits, arranged as a dodecamer of pentamers.

It catalyses the reaction (2S)-2-hydroxy-3-oxobutyl phosphate + 5-amino-6-(D-ribitylamino)uracil = 6,7-dimethyl-8-(1-D-ribityl)lumazine + phosphate + 2 H2O + H(+). The protein operates within cofactor biosynthesis; riboflavin biosynthesis; riboflavin from 2-hydroxy-3-oxobutyl phosphate and 5-amino-6-(D-ribitylamino)uracil: step 1/2. Its function is as follows. Catalyzes the formation of 6,7-dimethyl-8-ribityllumazine by condensation of 5-amino-6-(D-ribitylamino)uracil with 3,4-dihydroxy-2-butanone 4-phosphate. This is the penultimate step in the biosynthesis of riboflavin. The chain is 6,7-dimethyl-8-ribityllumazine synthase from Coxiella burnetii (strain Dugway 5J108-111).